Consider the following 126-residue polypeptide: MAFKVVISDKEKSVQMEVDPSESRGLIGLTIGDEFDGSIIGLSGYKLKITGGSDKNGFPMKKTVPGARRIRSLVSGGVGYKPRRDGERRRKTFRGNTISDDIVQINTVVIEKGEKPLEELLGADEE.

It belongs to the eukaryotic ribosomal protein eS6 family.

The sequence is that of Small ribosomal subunit protein eS6 from Methanothermobacter thermautotrophicus (strain ATCC 29096 / DSM 1053 / JCM 10044 / NBRC 100330 / Delta H) (Methanobacterium thermoautotrophicum).